The following is a 296-amino-acid chain: Solute carrier protein FPSE_08119 (296 aa).

Transmembrane regions (helical) follow at residues 12-32 (GLAA…GMVA), 122-142 (AGVG…VILI), and 219-239 (AVAA…FDFV). Solcar repeat units lie at residues 16–102 (LQTA…FEKE), 114–205 (LSFG…AKNQ), and 213–296 (SPPV…GPHS).

Belongs to the mitochondrial carrier (TC 2.A.29) family.

The protein resides in the mitochondrion inner membrane. Its function is as follows. Solute carrier protein; part of the Fusarium detoxification of benzoxazolinone cluster involved in the degradation of benzoxazolinones produced by the host plant. Maize, wheat, and rye produce the 2 benzoxazinone phytoanticipins 2,4-dihy-droxy-7-methoxy-1,4-benzoxazin-3-one (DIMBOA) and 2,4-dihydroxy-1,4-benzoxazin-3-one (DIBOA) that, due to their inherent instability once released, spontaneously degrade to the more stable corresponding benzoxazolinones, 6-methoxy-2-benzoxazolinone (MBOA) and 2-benzoxazolinone (BOA), respectively. This Fusarium pseudograminearum (strain CS3096) (Wheat and barley crown-rot fungus) protein is Solute carrier protein FPSE_08119.